The primary structure comprises 485 residues: MSIRFESIEKLTELIKNKEIKPSDVVKDIYAAIEETDPTIKSFLALDKENAIKKAEELDELQAKDQMDGKLFGIPMGIKDNIITKDVETTCASKMLEGFVPIYESTVMNKLHDENAVLIGKLNMDEFAMGGSTETSYFKKTLNPFDHTAVPGGSSGGSAAAVAAGLVPFSLGSDTGGSIRQPASYCGVVGMKPTYGRVSRFGLVAFASSLDQIGPITRNVKDNALVLEAISGVDANDSTSAPVDDVDFTSDIGKDIKGLKIALPKEYLGEGVSEEVKTSVKEAVETLKSLGAEVDEVSLPNTKYGIPSYYVIASSEASANLARFDGIRYGYHSKEAQSLEELYKMSRSEGFGEEVKRRIFLGTFALSSGYYDAYYKKSQKVRTLIKNDFDKVFESYDVVVGPTAPTTAFNIGEEIDDPLTMYANDLLTTPVNLAGLPGISVPCGQSNGRPIGLQLIGKPFDEKTLYRVAYQFETQYNLHDAYENL.

Residues Lys79 and Ser154 each act as charge relay system in the active site. The active-site Acyl-ester intermediate is the Ser178.

It belongs to the amidase family. GatA subfamily. Heterotrimer of A, B and C subunits.

It catalyses the reaction L-glutamyl-tRNA(Gln) + L-glutamine + ATP + H2O = L-glutaminyl-tRNA(Gln) + L-glutamate + ADP + phosphate + H(+). Its function is as follows. Allows the formation of correctly charged Gln-tRNA(Gln) through the transamidation of misacylated Glu-tRNA(Gln) in organisms which lack glutaminyl-tRNA synthetase. The reaction takes place in the presence of glutamine and ATP through an activated gamma-phospho-Glu-tRNA(Gln). The polypeptide is Glutamyl-tRNA(Gln) amidotransferase subunit A (Staphylococcus epidermidis (strain ATCC 12228 / FDA PCI 1200)).